The following is a 312-amino-acid chain: Porphobilinogen deaminase (312 aa).

The residue at position 241 (Cys-241) is an S-(dipyrrolylmethanemethyl)cysteine.

The protein belongs to the HMBS family. In terms of assembly, monomer. Dipyrromethane is required as a cofactor.

The catalysed reaction is 4 porphobilinogen + H2O = hydroxymethylbilane + 4 NH4(+). Its pathway is porphyrin-containing compound metabolism; protoporphyrin-IX biosynthesis; coproporphyrinogen-III from 5-aminolevulinate: step 2/4. It participates in porphyrin-containing compound metabolism; chlorophyll biosynthesis. Functionally, tetrapolymerization of the monopyrrole PBG into the hydroxymethylbilane pre-uroporphyrinogen in several discrete steps. In Chlorobaculum tepidum (strain ATCC 49652 / DSM 12025 / NBRC 103806 / TLS) (Chlorobium tepidum), this protein is Porphobilinogen deaminase.